A 333-amino-acid polypeptide reads, in one-letter code: Glycerol-3-phosphate dehydrogenase [NAD(P)+] (333 aa).

Positions 15 and 108 each coordinate NADPH. 3 residues coordinate sn-glycerol 3-phosphate: Lys-108, Gly-136, and Ser-138. An NADPH-binding site is contributed by Ala-140. Sn-glycerol 3-phosphate contacts are provided by Lys-191, Asp-244, Ser-254, Arg-255, and Asn-256. Lys-191 (proton acceptor) is an active-site residue. Arg-255 contacts NADPH. NADPH-binding residues include Val-279 and Glu-281.

It belongs to the NAD-dependent glycerol-3-phosphate dehydrogenase family.

The protein resides in the cytoplasm. It catalyses the reaction sn-glycerol 3-phosphate + NAD(+) = dihydroxyacetone phosphate + NADH + H(+). The enzyme catalyses sn-glycerol 3-phosphate + NADP(+) = dihydroxyacetone phosphate + NADPH + H(+). Its pathway is membrane lipid metabolism; glycerophospholipid metabolism. In terms of biological role, catalyzes the reduction of the glycolytic intermediate dihydroxyacetone phosphate (DHAP) to sn-glycerol 3-phosphate (G3P), the key precursor for phospholipid synthesis. This Maricaulis maris (strain MCS10) (Caulobacter maris) protein is Glycerol-3-phosphate dehydrogenase [NAD(P)+].